A 373-amino-acid chain; its full sequence is 3-dehydroquinate synthase (373 aa).

Residues G120 to D124, T144 to T145, K157, K166, and F184 to T187 contribute to the NAD(+) site. Zn(2+)-binding residues include E199, H262, and H278.

Belongs to the sugar phosphate cyclases superfamily. Dehydroquinate synthase family. NAD(+) is required as a cofactor. The cofactor is Co(2+). Requires Zn(2+) as cofactor.

Its subcellular location is the cytoplasm. It catalyses the reaction 7-phospho-2-dehydro-3-deoxy-D-arabino-heptonate = 3-dehydroquinate + phosphate. It functions in the pathway metabolic intermediate biosynthesis; chorismate biosynthesis; chorismate from D-erythrose 4-phosphate and phosphoenolpyruvate: step 2/7. In terms of biological role, catalyzes the conversion of 3-deoxy-D-arabino-heptulosonate 7-phosphate (DAHP) to dehydroquinate (DHQ). The polypeptide is 3-dehydroquinate synthase (Clostridium tetani (strain Massachusetts / E88)).